The chain runs to 485 residues: Cysteine--tRNA ligase (485 aa).

Cys-27 is a Zn(2+) binding site. The short motif at 29–39 (ITAYDLCHIGH) is the 'HIGH' region element. Residues Cys-208, His-233, and Glu-237 each coordinate Zn(2+). A 'KMSKS' region motif is present at residues 265–269 (KMSKS). Lys-268 is an ATP binding site.

This sequence belongs to the class-I aminoacyl-tRNA synthetase family. As to quaternary structure, monomer. Requires Zn(2+) as cofactor.

It is found in the cytoplasm. The catalysed reaction is tRNA(Cys) + L-cysteine + ATP = L-cysteinyl-tRNA(Cys) + AMP + diphosphate. The protein is Cysteine--tRNA ligase of Nitratidesulfovibrio vulgaris (strain ATCC 29579 / DSM 644 / CCUG 34227 / NCIMB 8303 / VKM B-1760 / Hildenborough) (Desulfovibrio vulgaris).